The primary structure comprises 214 residues: Hypoxanthine-guanine phosphoribosyltransferase (214 aa).

Residue Ala-2 is modified to N-acetylalanine. Lys-69 provides a ligand contact to GMP. Residue Lys-103 is modified to N6-acetyllysine. Lys-115 is covalently cross-linked (Glycyl lysine isopeptide (Lys-Gly) (interchain with G-Cter in SUMO1); alternate). A Glycyl lysine isopeptide (Lys-Gly) (interchain with G-Cter in SUMO2); alternate cross-link involves residue Lys-115. Residues 134–142 (EDIIDTGKT), Lys-166, 186–188 (KFV), and Asp-194 each bind GMP. Residue Asp-138 is the Proton acceptor of the active site. Thr-142 carries the post-translational modification Phosphothreonine. Asp-194 serves as a coordination point for Mg(2+).

This sequence belongs to the purine/pyrimidine phosphoribosyltransferase family. In terms of assembly, homotetramer. It depends on Mg(2+) as a cofactor.

It is found in the cytoplasm. The catalysed reaction is IMP + diphosphate = hypoxanthine + 5-phospho-alpha-D-ribose 1-diphosphate. The enzyme catalyses GMP + diphosphate = guanine + 5-phospho-alpha-D-ribose 1-diphosphate. It functions in the pathway purine metabolism; IMP biosynthesis via salvage pathway; IMP from hypoxanthine: step 1/1. In terms of biological role, converts guanine to guanosine monophosphate, and hypoxanthine to inosine monophosphate. Transfers the 5-phosphoribosyl group from 5-phosphoribosylpyrophosphate onto the purine. Plays a central role in the generation of purine nucleotides through the purine salvage pathway. The chain is Hypoxanthine-guanine phosphoribosyltransferase (Hprt1) from Mus spretus (Western Mediterranean mouse).